We begin with the raw amino-acid sequence, 168 residues long: 2-C-methyl-D-erythritol 2,4-cyclodiphosphate synthase (168 aa).

Residues Asp11 and His13 each contribute to the a divalent metal cation site. 4-CDP-2-C-methyl-D-erythritol 2-phosphate contacts are provided by residues 11-13 and 38-39; these read DVH and HS. His46 is an a divalent metal cation binding site. 4-CDP-2-C-methyl-D-erythritol 2-phosphate contacts are provided by residues 60-62, 133-136, Phe140, and Arg143; these read DIG and TTTD.

It belongs to the IspF family. As to quaternary structure, homotrimer. Requires a divalent metal cation as cofactor.

It catalyses the reaction 4-CDP-2-C-methyl-D-erythritol 2-phosphate = 2-C-methyl-D-erythritol 2,4-cyclic diphosphate + CMP. It functions in the pathway isoprenoid biosynthesis; isopentenyl diphosphate biosynthesis via DXP pathway; isopentenyl diphosphate from 1-deoxy-D-xylulose 5-phosphate: step 4/6. In terms of biological role, involved in the biosynthesis of isopentenyl diphosphate (IPP) and dimethylallyl diphosphate (DMAPP), two major building blocks of isoprenoid compounds. Catalyzes the conversion of 4-diphosphocytidyl-2-C-methyl-D-erythritol 2-phosphate (CDP-ME2P) to 2-C-methyl-D-erythritol 2,4-cyclodiphosphate (ME-CPP) with a corresponding release of cytidine 5-monophosphate (CMP). The chain is 2-C-methyl-D-erythritol 2,4-cyclodiphosphate synthase from Cutibacterium acnes (strain DSM 16379 / KPA171202) (Propionibacterium acnes).